Here is a 306-residue protein sequence, read N- to C-terminus: NAD-dependent protein deacylase (306 aa).

One can recognise a Deacetylase sirtuin-type domain in the interval 1-305 (MNKQLKEFQE…PIALKPLIGD (305 aa)). Position 23–42 (23–42 (GAGLSASSGLPTFRGSQGLW)) interacts with NAD(+). Residues tyrosine 67 and arginine 70 each contribute to the substrate site. 103 to 106 (QNVD) is an NAD(+) binding site. The active-site Proton acceptor is the histidine 123. Positions 131, 136, 200, and 203 each coordinate Zn(2+). Residues 243-245 (GTS), 269-271 (NTD), and alanine 291 each bind NAD(+).

This sequence belongs to the sirtuin family. Class III subfamily. Zn(2+) serves as cofactor.

It localises to the mitochondrion. It carries out the reaction N(6)-malonyl-L-lysyl-[protein] + NAD(+) + H2O = 2''-O-malonyl-ADP-D-ribose + nicotinamide + L-lysyl-[protein]. It catalyses the reaction N(6)-succinyl-L-lysyl-[protein] + NAD(+) + H2O = 2''-O-succinyl-ADP-D-ribose + nicotinamide + L-lysyl-[protein]. The enzyme catalyses N(6)-glutaryl-L-lysyl-[protein] + NAD(+) + H2O = 2''-O-glutaryl-ADP-D-ribose + nicotinamide + L-lysyl-[protein]. Its function is as follows. NAD-dependent lysine demalonylase, desuccinylase and deglutarylase that specifically removes malonyl, succinyl and glutaryl groups on target proteins. Has weak NAD-dependent protein deacetylase activity; however this activity may not be physiologically relevant in vivo. In Candida albicans (strain SC5314 / ATCC MYA-2876) (Yeast), this protein is NAD-dependent protein deacylase.